The following is a 255-amino-acid chain: Pimeloyl-[acyl-carrier protein] methyl ester esterase (255 aa).

The region spanning 16–242 is the AB hydrolase-1 domain; it reads LVLLHGWGLN…AAHAPFISHP (227 aa). Substrate contacts are provided by residues Trp22, 82-83, and 143-147; these read SL and FLALQ. Catalysis depends on Ser82, which acts as the Nucleophile. Catalysis depends on residues Asp207 and His235. His235 is a substrate binding site.

The protein belongs to the AB hydrolase superfamily. Carboxylesterase BioH family. Monomer.

It is found in the cytoplasm. It carries out the reaction 6-carboxyhexanoyl-[ACP] methyl ester + H2O = 6-carboxyhexanoyl-[ACP] + methanol + H(+). The protein operates within cofactor biosynthesis; biotin biosynthesis. The physiological role of BioH is to remove the methyl group introduced by BioC when the pimeloyl moiety is complete. It allows to synthesize pimeloyl-ACP via the fatty acid synthetic pathway through the hydrolysis of the ester bonds of pimeloyl-ACP esters. This Pectobacterium carotovorum subsp. carotovorum (strain PC1) protein is Pimeloyl-[acyl-carrier protein] methyl ester esterase.